A 346-amino-acid polypeptide reads, in one-letter code: MDPIALDERIGTLDYLRGFALLGIILVNILGLLTVKTPALHSVDAVYQRFLYFFVEARFYPIFSFLFGVGFYLFIARANTRGENGAILFLRRILVLFIFGFIHFLFQPGEALTVYASCGLLMLPFYKIKKEVNLFTGCILLLFVSIFAAKIFMPLPLILLGLSAGQYRIFEKLARYKTETAIFTFFMFILSVGGLLLQYCYVPEQPFNNLNGLEKNYQNMDQLKWFLHLGVATGPILSAFYAGFLLLLLQAPIARRLLSPLKSYGRMALTNYISQTALILLAGKLFHLFNRITYLQSLWLCLAIYVIQLIFSAMWLKYCKFGPLEWVWRMMTYNRKFPILLKKEAD.

The next 8 membrane-spanning stretches (helical) occupy residues 15-35 (YLRG…LLTV), 55-75 (VEAR…YLFI), 93-113 (ILVL…EALT), 139-159 (ILLL…PLIL), 182-202 (IFTF…YCYV), 229-249 (LGVA…LLLL), 269-289 (LTNY…FHLF), and 295-315 (LQSL…SAMW).

It to E.coli YeiB, B.subtilis YxaH and B.subtilis YrkO.

Its subcellular location is the cell membrane. In terms of biological role, involved in transport. This is an uncharacterized protein from Bacillus acidopullulyticus.